We begin with the raw amino-acid sequence, 438 residues long: Na(+)/H(+) antiporter NhaA 2 (438 aa).

The next 11 helical transmembrane spans lie at 21-41, 66-86, 102-122, 130-150, 160-180, 183-203, 206-226, 308-328, 341-361, 376-396, and 410-430; these read SGGI…NSPW, LHHW…GLEL, MLPI…FHFI, KGWG…LALL, IFLT…IALF, GELA…LIAG, LGVQ…VVLL, WVIF…VLQL, LGVA…FSWI, WMDV…SLFI, and AKLG…TVLS.

Belongs to the NhaA Na(+)/H(+) (TC 2.A.33) antiporter family.

It localises to the cell inner membrane. The enzyme catalyses Na(+)(in) + 2 H(+)(out) = Na(+)(out) + 2 H(+)(in). In terms of biological role, na(+)/H(+) antiporter that extrudes sodium in exchange for external protons. The polypeptide is Na(+)/H(+) antiporter NhaA 2 (Syntrophotalea carbinolica (strain DSM 2380 / NBRC 103641 / GraBd1) (Pelobacter carbinolicus)).